The primary structure comprises 344 residues: uncharacterized protein (344 aa).

8 helical membrane-spanning segments follow: residues 25–45 (GAGW…VGAV), 68–88 (FVDA…ADGV), 104–124 (GVVP…GWNC), 133–153 (SACA…GVGA), 161–181 (GVGT…LAVV), 224–244 (LGAF…DAAL), 276–296 (VFAL…PAAL), and 302–322 (LVTA…LAGV).

It belongs to the peptidase S58 family.

Its subcellular location is the cell membrane. Its function is as follows. Aminopeptidase. This is an uncharacterized protein from Mycobacterium bovis (strain ATCC BAA-935 / AF2122/97).